The chain runs to 375 residues: Chaperone protein DnaJ (375 aa).

Residues 5–69 (DYYEVLGVGK…QKRAHYDQFG (65 aa)) form the J domain. The CR-type zinc finger occupies 132–214 (GKETTIEIPR…CGGTGKVKKR (83 aa)). Positions 145, 148, 162, 165, 188, 191, 202, and 205 each coordinate Zn(2+). 4 CXXCXGXG motif repeats span residues 145 to 152 (CETCSGSG), 162 to 169 (CSHCGGSG), 188 to 195 (CHYCNGTG), and 202 to 209 (CSTCGGTG).

This sequence belongs to the DnaJ family. In terms of assembly, homodimer. The cofactor is Zn(2+).

The protein resides in the cytoplasm. Its function is as follows. Participates actively in the response to hyperosmotic and heat shock by preventing the aggregation of stress-denatured proteins and by disaggregating proteins, also in an autonomous, DnaK-independent fashion. Unfolded proteins bind initially to DnaJ; upon interaction with the DnaJ-bound protein, DnaK hydrolyzes its bound ATP, resulting in the formation of a stable complex. GrpE releases ADP from DnaK; ATP binding to DnaK triggers the release of the substrate protein, thus completing the reaction cycle. Several rounds of ATP-dependent interactions between DnaJ, DnaK and GrpE are required for fully efficient folding. Also involved, together with DnaK and GrpE, in the DNA replication of plasmids through activation of initiation proteins. The chain is Chaperone protein DnaJ from Bacillus licheniformis (strain ATCC 14580 / DSM 13 / JCM 2505 / CCUG 7422 / NBRC 12200 / NCIMB 9375 / NCTC 10341 / NRRL NRS-1264 / Gibson 46).